A 903-amino-acid chain; its full sequence is Protein U7 (903 aa).

The chain crosses the membrane as a helical span at residues 665–685; that stretch reads KALLTFLTNIVFIVFVVNTLY.

It belongs to the herpesviridae US22 family.

It localises to the host membrane. This chain is Protein U7 (U7), found in Human herpesvirus 6B (strain Z29) (HHV-6 variant B).